A 211-amino-acid polypeptide reads, in one-letter code: Imidazole glycerol phosphate synthase subunit HisH (211 aa).

In terms of domain architecture, Glutamine amidotransferase type-1 spans 1–206 (MIGIIDYGRG…GKWVNEDATV (206 aa)). Cys-79 functions as the Nucleophile in the catalytic mechanism. Active-site residues include His-181 and Glu-183.

In terms of assembly, heterodimer of HisH and HisF.

It is found in the cytoplasm. It carries out the reaction 5-[(5-phospho-1-deoxy-D-ribulos-1-ylimino)methylamino]-1-(5-phospho-beta-D-ribosyl)imidazole-4-carboxamide + L-glutamine = D-erythro-1-(imidazol-4-yl)glycerol 3-phosphate + 5-amino-1-(5-phospho-beta-D-ribosyl)imidazole-4-carboxamide + L-glutamate + H(+). The catalysed reaction is L-glutamine + H2O = L-glutamate + NH4(+). It functions in the pathway amino-acid biosynthesis; L-histidine biosynthesis; L-histidine from 5-phospho-alpha-D-ribose 1-diphosphate: step 5/9. In terms of biological role, IGPS catalyzes the conversion of PRFAR and glutamine to IGP, AICAR and glutamate. The HisH subunit catalyzes the hydrolysis of glutamine to glutamate and ammonia as part of the synthesis of IGP and AICAR. The resulting ammonia molecule is channeled to the active site of HisF. This Desulfitobacterium hafniense (strain DSM 10664 / DCB-2) protein is Imidazole glycerol phosphate synthase subunit HisH.